The sequence spans 231 residues: Orotate phosphoribosyltransferase (231 aa).

5-phospho-alpha-D-ribose 1-diphosphate is bound by residues K27, 79–80 (YK), R106, K107, K110, H112, and 133–141 (DDVMTAGTA). Residues T137 and R166 each contribute to the orotate site.

The protein belongs to the purine/pyrimidine phosphoribosyltransferase family. PyrE subfamily. As to quaternary structure, homodimer. The cofactor is Mg(2+).

The catalysed reaction is orotidine 5'-phosphate + diphosphate = orotate + 5-phospho-alpha-D-ribose 1-diphosphate. It participates in pyrimidine metabolism; UMP biosynthesis via de novo pathway; UMP from orotate: step 1/2. In terms of biological role, catalyzes the transfer of a ribosyl phosphate group from 5-phosphoribose 1-diphosphate to orotate, leading to the formation of orotidine monophosphate (OMP). This Bifidobacterium longum (strain DJO10A) protein is Orotate phosphoribosyltransferase.